We begin with the raw amino-acid sequence, 259 residues long: MSAISIQSVTKRFPNGFEALKGIDTEIQTGSFTVVLGPSGAGKSTLLRLMNGLETPTTGAVRIDGETVDGHRLRHIRSKVAMVFQQFNLVERLSVVTNVLTGRLAQRSWVGSVFYLFRQEDLGIAREALARVGLTDKAWSRADKLSGGQQQRVGIARALAQRPKVILADEPVASLDPVSSEEIMALLREICDRDGITVVVNLHQVDLAKRFADRIIGMNAGRVVFDGTPAELSAQALRTIYQREGIEDDTSLDLALAYA.

Positions 4 to 245 constitute an ABC transporter domain; the sequence is ISIQSVTKRF…ALRTIYQREG (242 aa). Position 37–44 (37–44) interacts with ATP; that stretch reads GPSGAGKS.

The protein belongs to the ABC transporter superfamily. Phosphonates importer (TC 3.A.1.9.1) family. As to quaternary structure, the complex is composed of two ATP-binding proteins (PhnC), two transmembrane proteins (PhnE) and a solute-binding protein (PhnD).

The protein localises to the cell inner membrane. It carries out the reaction phosphonate(out) + ATP + H2O = phosphonate(in) + ADP + phosphate + H(+). Functionally, part of the ABC transporter complex PhnCDE involved in phosphonates import. Responsible for energy coupling to the transport system. This chain is Phosphonates import ATP-binding protein PhnC, found in Thiobacillus denitrificans (strain ATCC 25259 / T1).